Reading from the N-terminus, the 217-residue chain is MILILLGPPGIGKGTQASVLSDILKINHIATGDIFRKNFKENTELGILIKKIIAQGLLVPDDITNQMIADYLSKDIATKDFLLDGFPRNVLQARFLDDFFKNSHLFLTKVIYFNAGTQDLMKRIVGRRICPECGKVYHIENIPPKTPGICDKDQKTLIQREDDKPETFLKRLKVFNQETLPLVQYYREQNQLFEVDGMQNIDQVTKMILEVLETDRK.

10 to 15 contributes to the ATP binding site; the sequence is GIGKGT. Residues 30–59 are NMP; sequence ATGDIFRKNFKENTELGILIKKIIAQGLLV. Residues T31, R36, 57–59, 85–88, and Q92 contribute to the AMP site; these read LLV and GFPR. Positions 126–163 are LID; the sequence is GRRICPECGKVYHIENIPPKTPGICDKDQKTLIQREDD. Position 127 (R127) interacts with ATP. Zn(2+) is bound by residues C130 and C133. Residue 136 to 137 participates in ATP binding; the sequence is VY. Zn(2+)-binding residues include C150 and D153. R160 and R171 together coordinate AMP. Q199 is an ATP binding site.

The protein belongs to the adenylate kinase family. In terms of assembly, monomer.

It is found in the cytoplasm. It carries out the reaction AMP + ATP = 2 ADP. It functions in the pathway purine metabolism; AMP biosynthesis via salvage pathway; AMP from ADP: step 1/1. Functionally, catalyzes the reversible transfer of the terminal phosphate group between ATP and AMP. Plays an important role in cellular energy homeostasis and in adenine nucleotide metabolism. The chain is Adenylate kinase from Onion yellows phytoplasma (strain OY-M).